Consider the following 445-residue polypeptide: Tripartite motif-containing protein 43B (445 aa).

The RING-type zinc finger occupies 16–57; that stretch reads CSICQGIFMNPVYLKCGHKFCEACLLLFQEDIKFPAYCPMCM. The B box-type zinc finger occupies 88 to 129; it reads SEEHKCVTHKAKKMIFCDKSKILLCHLCSDSQEHSGHTHCSI. C93, H96, C115, and H121 together coordinate Zn(2+). The B30.2/SPRY domain maps to 271-445; the sequence is RLRAHSIPGL…VRPFFSAVYT (175 aa).

The protein belongs to the TRIM/RBCC family.

The protein is Tripartite motif-containing protein 43B of Mus musculus (Mouse).